Here is a 413-residue protein sequence, read N- to C-terminus: Multifunctional CCA protein (413 aa).

Positions 8 and 11 each coordinate ATP. CTP-binding residues include G8 and R11. D21 and D23 together coordinate Mg(2+). ATP is bound by residues R91, R143, and R146. 3 residues coordinate CTP: R91, R143, and R146. The HD domain occupies 232-333; it reads TGVHVMMVVD…VRFFERTDAL (102 aa).

It belongs to the tRNA nucleotidyltransferase/poly(A) polymerase family. Bacterial CCA-adding enzyme type 1 subfamily. As to quaternary structure, monomer. Can also form homodimers and oligomers. It depends on Mg(2+) as a cofactor. Ni(2+) serves as cofactor.

The catalysed reaction is a tRNA precursor + 2 CTP + ATP = a tRNA with a 3' CCA end + 3 diphosphate. It carries out the reaction a tRNA with a 3' CCA end + 2 CTP + ATP = a tRNA with a 3' CCACCA end + 3 diphosphate. Its function is as follows. Catalyzes the addition and repair of the essential 3'-terminal CCA sequence in tRNAs without using a nucleic acid template. Adds these three nucleotides in the order of C, C, and A to the tRNA nucleotide-73, using CTP and ATP as substrates and producing inorganic pyrophosphate. tRNA 3'-terminal CCA addition is required both for tRNA processing and repair. Also involved in tRNA surveillance by mediating tandem CCA addition to generate a CCACCA at the 3' terminus of unstable tRNAs. While stable tRNAs receive only 3'-terminal CCA, unstable tRNAs are marked with CCACCA and rapidly degraded. The sequence is that of Multifunctional CCA protein from Burkholderia multivorans (strain ATCC 17616 / 249).